The primary structure comprises 161 residues: Nucleotide-binding protein Bpro_1596 (161 aa).

The protein belongs to the YajQ family.

Functionally, nucleotide-binding protein. The polypeptide is Nucleotide-binding protein Bpro_1596 (Polaromonas sp. (strain JS666 / ATCC BAA-500)).